The primary structure comprises 565 residues: Hemagglutinin-neuraminidase (565 aa).

At 1-19 (MVAEDAPVRGTCRVLFRTT) the chain is on the intravirion side. The helical transmembrane segment at 20–40 (TLLFLCTLLSLSISILYESLI) threads the bilayer. Residues 41 to 565 (TQNQIMSQAG…VPFIRQVTLS (525 aa)) lie on the Virion surface side of the membrane. N-linked (GlcNAc...) asparagine; by host glycosylation is found at Asn110 and Asn139. 3 cysteine pairs are disulfide-bonded: Cys161–Cys185, Cys175–Cys236, and Cys227–Cys240. The tract at residues 223 to 228 (NRKSCS) is involved in neuraminidase activity. A glycan (N-linked (GlcNAc...) asparagine; by host) is linked at Asn267. 3 cysteine pairs are disulfide-bonded: Cys333–Cys454, Cys365–Cys375, and Cys448–Cys458. Residue Asn504 is glycosylated (N-linked (GlcNAc...) asparagine; by host). The cysteines at positions 528 and 539 are disulfide-linked.

Belongs to the paramyxoviruses hemagglutinin-neuraminidase family. Homotetramer; composed of disulfide-linked homodimers. Interacts with F protein trimer.

It localises to the virion membrane. The protein localises to the host cell membrane. The catalysed reaction is Hydrolysis of alpha-(2-&gt;3)-, alpha-(2-&gt;6)-, alpha-(2-&gt;8)- glycosidic linkages of terminal sialic acid residues in oligosaccharides, glycoproteins, glycolipids, colominic acid and synthetic substrates.. Functionally, attaches the virus to sialic acid-containing cell receptors and thereby initiating infection. Binding of HN protein to the receptor induces a conformational change that allows the F protein to trigger virion/cell membranes fusion. In terms of biological role, neuraminidase activity ensures the efficient spread of the virus by dissociating the mature virions from the neuraminic acid containing glycoproteins. The polypeptide is Hemagglutinin-neuraminidase (HN) (Canis lupus familiaris (Dog)).